Consider the following 571-residue polypeptide: MGERFDKYEYLQDLMRRRGFAWGSFEIYGGSRGFYDYGPLGATIKRKIEKKIREAFIREGFFEIETPDITPEQVFIASGHVEKFVDPIVECKKCGARFRADHLIEETLGIDVEGKSAEEMTKIIREHNIKCPECGGELGDVFYFNLMFETYIGPYKDKKAYLRPETAQGIFVNFKRLNAFARNKLPFGVFQIGKAYRNEISPRQGMIRLREFTQAEVEIFFNPNETEHPHFDEVKHEKLRLYPIENQLKDLGMIELTAEEAVKKGYLMNTFFAYYLVMIKKILLDIGIPEDKIRFRQQLPEERAHYSADTWDAEVYSERFGWVECVGLAYRTDYDLSRHMKMSGADLTVMIHYDKPKIVKRLKVSLNMKSVGPKLKKDAKRINEKIQAMSEEELRELVKKLNEEGKIVIDGYELSKDDFIIKEVEEKVTGEKIIPHVLEPSFGIDRPFYLLLENSLTIDEDGRIYLKIKKDMAPIEVAVLPLVAKEPLTKIAYDLFRKLQKEGFIVVYDEKDSIGKRYMRYDEIGTPYCVTIDNQTPIDGTVTIRDRDTREQIRVKLEDVPRKLKELIFGS.

Residues arginine 99 and glutamate 165 each coordinate substrate. ATP-binding positions include 197 to 199, 207 to 212, 324 to 325, and 443 to 446; these read RNE, IRLREF, EC, and GIDR. Residue 212–216 participates in substrate binding; sequence FTQAE. 439–443 contacts substrate; it reads EPSFG.

It belongs to the class-II aminoacyl-tRNA synthetase family.

It is found in the cytoplasm. The enzyme catalyses tRNA(Gly) + glycine + ATP = glycyl-tRNA(Gly) + AMP + diphosphate. Its function is as follows. Catalyzes the attachment of glycine to tRNA(Gly). The polypeptide is Glycine--tRNA ligase (Pyrococcus abyssi (strain GE5 / Orsay)).